A 1030-amino-acid polypeptide reads, in one-letter code: Translation initiation factor IF-2 (1030 aa).

2 stretches are compositionally biased toward low complexity: residues 56–69 (APSE…AADS) and 111–132 (PNIV…APIK). 2 disordered regions span residues 56–361 (APSE…KRRQ) and 394–434 (SKPK…REQK). Positions 134 to 144 (ARPEKSAEKPE) are enriched in basic and acidic residues. Residues 154 to 164 (AASAEPAKSPS) are compositionally biased toward low complexity. The segment covering 188–206 (LLRKPEIVRRSEAKPERTS) has biased composition (basic and acidic residues). The segment covering 259 to 273 (VAASASGVPAAASRV) has biased composition (low complexity). Residues 522-695 (TRPPVVTVMG…LLVTEVEELV (174 aa)) form the tr-type G domain. Residues 531–538 (GHVDHGKT) form a G1 region. Position 531–538 (531–538 (GHVDHGKT)) interacts with GTP. Residues 556–560 (GITQH) are G2. The tract at residues 581–584 (DTPG) is G3. GTP is bound by residues 581–585 (DTPGH) and 635–638 (NKCD). The tract at residues 635-638 (NKCD) is G4. Positions 671 to 673 (SAI) are G5.

Belongs to the TRAFAC class translation factor GTPase superfamily. Classic translation factor GTPase family. IF-2 subfamily.

It is found in the cytoplasm. Functionally, one of the essential components for the initiation of protein synthesis. Protects formylmethionyl-tRNA from spontaneous hydrolysis and promotes its binding to the 30S ribosomal subunits. Also involved in the hydrolysis of GTP during the formation of the 70S ribosomal complex. In Synechococcus elongatus (strain ATCC 33912 / PCC 7942 / FACHB-805) (Anacystis nidulans R2), this protein is Translation initiation factor IF-2.